Consider the following 563-residue polypeptide: Mitochondrial distribution and morphology protein 34 (563 aa).

Residues 1–195 (MAFNFNWSPL…LPAIIHRLSL (195 aa)) form the SMP-LTD domain. Disordered stretches follow at residues 298–460 (ERGD…QIPT) and 535–563 (RHDK…PKAL). Polar residues-rich tracts occupy residues 303–332 (AGTT…FSNR) and 346–357 (SLVNMNSATTGL). Residues 365 to 383 (SRSHTTRKKKNRVVNLRKS) show a composition bias toward basic residues. Composition is skewed to polar residues over residues 386–402 (TDNV…SITA) and 444–460 (PSRS…QIPT).

It belongs to the MDM34 family. Component of the ER-mitochondria encounter structure (ERMES) or MDM complex, composed of mmm1, mdm10, mdm12 and mdm34.

The protein localises to the mitochondrion outer membrane. Functionally, component of the ERMES/MDM complex, which serves as a molecular tether to connect the endoplasmic reticulum (ER) and mitochondria. Components of this complex are involved in the control of mitochondrial shape and protein biogenesis, and function in nonvesicular lipid trafficking between the ER and mitochondria. Mdm34 is required for the interaction of the ER-resident membrane protein mmm1 and the outer mitochondrial membrane-resident beta-barrel protein mdm10. In Sclerotinia sclerotiorum (strain ATCC 18683 / 1980 / Ss-1) (White mold), this protein is Mitochondrial distribution and morphology protein 34.